The chain runs to 395 residues: 1-deoxy-D-xylulose 5-phosphate reductoisomerase (395 aa).

The NADPH site is built by threonine 13, glycine 14, serine 15, isoleucine 16, lysine 40, and asparagine 127. Lysine 128 provides a ligand contact to 1-deoxy-D-xylulose 5-phosphate. Glutamate 129 lines the NADPH pocket. A Mn(2+)-binding site is contributed by aspartate 153. 4 residues coordinate 1-deoxy-D-xylulose 5-phosphate: serine 154, glutamate 155, serine 184, and histidine 207. Mn(2+) is bound at residue glutamate 155. Glycine 213 is an NADPH binding site. 1-deoxy-D-xylulose 5-phosphate is bound by residues serine 220, asparagine 225, lysine 226, and glutamate 229. Glutamate 229 serves as a coordination point for Mn(2+).

The protein belongs to the DXR family. The cofactor is Mg(2+). Mn(2+) is required as a cofactor.

It carries out the reaction 2-C-methyl-D-erythritol 4-phosphate + NADP(+) = 1-deoxy-D-xylulose 5-phosphate + NADPH + H(+). The protein operates within isoprenoid biosynthesis; isopentenyl diphosphate biosynthesis via DXP pathway; isopentenyl diphosphate from 1-deoxy-D-xylulose 5-phosphate: step 1/6. In terms of biological role, catalyzes the NADPH-dependent rearrangement and reduction of 1-deoxy-D-xylulose-5-phosphate (DXP) to 2-C-methyl-D-erythritol 4-phosphate (MEP). This is 1-deoxy-D-xylulose 5-phosphate reductoisomerase from Nitrosospira multiformis (strain ATCC 25196 / NCIMB 11849 / C 71).